A 164-amino-acid polypeptide reads, in one-letter code: Transcription factor E (164 aa).

One can recognise an HTH TFE/IIEalpha-type domain in the interval 5-87; that stretch reads NDKVIRGYLR…LWHLDFSDIE (83 aa).

The protein belongs to the TFE family. As to quaternary structure, monomer. Interaction with RNA polymerase subunits RpoF and RpoE is necessary for Tfe stimulatory transcription activity. Able to interact with Tbp and RNA polymerase in the absence of DNA promoter. Interacts both with the preinitiation and elongation complexes.

Transcription factor that plays a role in the activation of archaeal genes transcribed by RNA polymerase. Facilitates transcription initiation by enhancing TATA-box recognition by TATA-box-binding protein (Tbp), and transcription factor B (Tfb) and RNA polymerase recruitment. Not absolutely required for transcription in vitro, but particularly important in cases where Tbp or Tfb function is not optimal. It dynamically alters the nucleic acid-binding properties of RNA polymerases by stabilizing the initiation complex and destabilizing elongation complexes. Seems to translocate with the RNA polymerase following initiation and acts by binding to the non template strand of the transcription bubble in elongation complexes. The protein is Transcription factor E of Methanosarcina mazei (strain ATCC BAA-159 / DSM 3647 / Goe1 / Go1 / JCM 11833 / OCM 88) (Methanosarcina frisia).